Here is a 153-residue protein sequence, read N- to C-terminus: ATP synthase subunit b' (153 aa).

The helical transmembrane segment at 20-40 (TLPLMAAQVVLLTFILNALFF) threads the bilayer.

This sequence belongs to the ATPase B chain family. F-type ATPases have 2 components, F(1) - the catalytic core - and F(0) - the membrane proton channel. F(1) has five subunits: alpha(3), beta(3), gamma(1), delta(1), epsilon(1). F(0) has four main subunits: a(1), b(1), b'(1) and c(10-14). The alpha and beta chains form an alternating ring which encloses part of the gamma chain. F(1) is attached to F(0) by a central stalk formed by the gamma and epsilon chains, while a peripheral stalk is formed by the delta, b and b' chains.

It localises to the cellular thylakoid membrane. F(1)F(0) ATP synthase produces ATP from ADP in the presence of a proton or sodium gradient. F-type ATPases consist of two structural domains, F(1) containing the extramembraneous catalytic core and F(0) containing the membrane proton channel, linked together by a central stalk and a peripheral stalk. During catalysis, ATP synthesis in the catalytic domain of F(1) is coupled via a rotary mechanism of the central stalk subunits to proton translocation. In terms of biological role, component of the F(0) channel, it forms part of the peripheral stalk, linking F(1) to F(0). The b'-subunit is a diverged and duplicated form of b found in plants and photosynthetic bacteria. This chain is ATP synthase subunit b', found in Prochlorococcus marinus (strain SARG / CCMP1375 / SS120).